Here is a 588-residue protein sequence, read N- to C-terminus: uncharacterized protein (588 aa).

The signal sequence occupies residues 1–19 (MRSTAYLTALLSFLGATHA). N45 and N104 each carry an N-linked (GlcNAc...) asparagine glycan. Residues 118–303 (GQGRIPLYSA…TSVTLRTFKD (186 aa)) enclose the FAD-binding PCMH-type domain. H156 is modified (pros-8alpha-FAD histidine). N179, N312, N320, N351, N370, and N446 each carry an N-linked (GlcNAc...) asparagine glycan.

This sequence belongs to the oxygen-dependent FAD-linked oxidoreductase family. The cofactor is FAD.

Its subcellular location is the secreted. This is an uncharacterized protein from Arthroderma benhamiae (strain ATCC MYA-4681 / CBS 112371) (Trichophyton mentagrophytes).